Here is a 652-residue protein sequence, read N- to C-terminus: Ethylmalonyl-CoA mutase (652 aa).

The B12-binding domain maps to 519 to 647 (PLKFVVGKPG…MDIVGLVDRT (129 aa)). Histidine 532 serves as a coordination point for adenosylcob(III)alamin.

This sequence belongs to the methylmalonyl-CoA mutase family. Homodimer. Adenosylcob(III)alamin serves as cofactor.

The catalysed reaction is (2R)-ethylmalonyl-CoA = (2S)-methylsuccinyl-CoA. Its function is as follows. Radical enzyme that catalyzes the transformation of (2R)-ethylmalonyl-CoA to (2S)-methylsuccinyl-CoA. Is involved in the ethylmalonyl-CoA pathway for acetyl-CoA assimilation required for R.sphaeroides growth on acetate as sole carbon source. Is highly specific for its substrate, ethylmalonyl-CoA, and accepts methylmalonyl-CoA only at 0.2% relative activity. This Cereibacter sphaeroides (strain ATCC 17023 / DSM 158 / JCM 6121 / CCUG 31486 / LMG 2827 / NBRC 12203 / NCIMB 8253 / ATH 2.4.1.) (Rhodobacter sphaeroides) protein is Ethylmalonyl-CoA mutase.